A 462-amino-acid polypeptide reads, in one-letter code: 23S rRNA (uracil(1939)-C(5))-methyltransferase RlmD (462 aa).

Positions 6–76 (KSRKPQQPEY…KRLEEAEMVE (71 aa)) constitute a TRAM domain. Positions 90, 96, 99, and 178 each coordinate [4Fe-4S] cluster. The S-adenosyl-L-methionine site is built by Gln-287, Phe-316, Asn-321, Glu-340, Asp-367, and Asp-388. Residue Cys-414 is the Nucleophile of the active site.

The protein belongs to the class I-like SAM-binding methyltransferase superfamily. RNA M5U methyltransferase family. RlmD subfamily.

It carries out the reaction uridine(1939) in 23S rRNA + S-adenosyl-L-methionine = 5-methyluridine(1939) in 23S rRNA + S-adenosyl-L-homocysteine + H(+). In terms of biological role, catalyzes the formation of 5-methyl-uridine at position 1939 (m5U1939) in 23S rRNA. In Acinetobacter baumannii (strain AB0057), this protein is 23S rRNA (uracil(1939)-C(5))-methyltransferase RlmD.